A 117-amino-acid polypeptide reads, in one-letter code: Glycine cleavage system H-like protein (117 aa).

The 83-residue stretch at 21–103 (IVRLGLSSRM…ESEGWFVVLQ (83 aa)) folds into the Lipoyl-binding domain. At K62 the chain carries N6-lipoyllysine.

The protein belongs to the GcvH family. Requires (R)-lipoate as cofactor.

This Chlamydia muridarum (strain MoPn / Nigg) protein is Glycine cleavage system H-like protein.